The primary structure comprises 433 residues: Serine--tRNA ligase (433 aa).

L-serine is bound at residue 235–237; it reads TSE. ATP is bound at residue 266–268; the sequence is RSE. Glu289 is an L-serine binding site. 353-356 is an ATP binding site; that stretch reads EISS. Residue Ser388 coordinates L-serine.

The protein belongs to the class-II aminoacyl-tRNA synthetase family. Type-1 seryl-tRNA synthetase subfamily. In terms of assembly, homodimer. The tRNA molecule binds across the dimer.

The protein resides in the cytoplasm. It catalyses the reaction tRNA(Ser) + L-serine + ATP = L-seryl-tRNA(Ser) + AMP + diphosphate + H(+). The catalysed reaction is tRNA(Sec) + L-serine + ATP = L-seryl-tRNA(Sec) + AMP + diphosphate + H(+). It participates in aminoacyl-tRNA biosynthesis; selenocysteinyl-tRNA(Sec) biosynthesis; L-seryl-tRNA(Sec) from L-serine and tRNA(Sec): step 1/1. Its function is as follows. Catalyzes the attachment of serine to tRNA(Ser). Is also able to aminoacylate tRNA(Sec) with serine, to form the misacylated tRNA L-seryl-tRNA(Sec), which will be further converted into selenocysteinyl-tRNA(Sec). The chain is Serine--tRNA ligase from Burkholderia pseudomallei (strain 1106a).